A 347-amino-acid chain; its full sequence is uncharacterized protein (347 aa).

An N-terminal signal peptide occupies residues 1-26 (MQGRVAGSCAPLGLLLVCLHLPGLFA). Polar residues predominate over residues 41-60 (GTNLPQLGQPSSTGPSNSEH). Disordered stretches follow at residues 41-110 (GTNL…MDSW) and 148-189 (SGPL…AGGK). Residues 148-157 (SGPLPGESSP) are compositionally biased toward low complexity.

Binds to numerous extracellular matrix proteins.

The protein localises to the secreted. It localises to the extracellular space. It is found in the extracellular matrix. This is an uncharacterized protein from Pan troglodytes (Chimpanzee).